Here is a 529-residue protein sequence, read N- to C-terminus: Tyrosinase (529 aa).

Positions methionine 1 to glycine 18 are cleaved as a signal peptide. Residues histidine 19–serine 476 are Lumenal, melanosome-facing. Asparagine 86, asparagine 111, and asparagine 161 each carry an N-linked (GlcNAc...) asparagine glycan. Positions 180, 202, and 211 each coordinate Cu cation. Asparagine 230 carries an N-linked (GlcNAc...) asparagine glycan. The tract at residues serine 287–proline 313 is disordered. The N-linked (GlcNAc...) asparagine glycan is linked to asparagine 337. Cu cation is bound by residues histidine 363 and histidine 367. A glycan (N-linked (GlcNAc...) asparagine) is linked at asparagine 371. Histidine 390 contributes to the Cu cation binding site. The chain crosses the membrane as a helical span at residues tryptophan 477–serine 497. Residues leucine 498–leucine 529 lie on the Cytoplasmic side of the membrane.

Belongs to the tyrosinase family. As to quaternary structure, forms an OPN3-dependent complex with DCT in response to blue light in melanocytes. It depends on Cu(2+) as a cofactor. In terms of processing, glycosylated.

It is found in the melanosome membrane. The protein localises to the melanosome. The enzyme catalyses 2 L-dopa + O2 = 2 L-dopaquinone + 2 H2O. It catalyses the reaction L-tyrosine + O2 = L-dopaquinone + H2O. It carries out the reaction 2 5,6-dihydroxyindole-2-carboxylate + O2 = 2 indole-5,6-quinone-2-carboxylate + 2 H2O. Functionally, this is a copper-containing oxidase that functions in the formation of pigments such as melanins and other polyphenolic compounds. Catalyzes the initial and rate limiting step in the cascade of reactions leading to melanin production from tyrosine. In addition to hydroxylating tyrosine to DOPA (3,4-dihydroxyphenylalanine), also catalyzes the oxidation of DOPA to DOPA-quinone, and possibly the oxidation of DHI (5,6-dihydroxyindole) to indole-5,6 quinone. The sequence is that of Tyrosinase (TYR) from Gorilla gorilla gorilla (Western lowland gorilla).